The sequence spans 207 residues: Thiamine-phosphate synthase (207 aa).

Residues 38-42 (QYRAK) and Asn-70 each bind 4-amino-2-methyl-5-(diphosphooxymethyl)pyrimidine. Asp-71 and Asp-90 together coordinate Mg(2+). A 4-amino-2-methyl-5-(diphosphooxymethyl)pyrimidine-binding site is contributed by Thr-109. Residue 135 to 137 (TNS) coordinates 2-[(2R,5Z)-2-carboxy-4-methylthiazol-5(2H)-ylidene]ethyl phosphate. Residue Lys-138 coordinates 4-amino-2-methyl-5-(diphosphooxymethyl)pyrimidine. Residues Gly-165 and 185 to 186 (IS) each bind 2-[(2R,5Z)-2-carboxy-4-methylthiazol-5(2H)-ylidene]ethyl phosphate.

The protein belongs to the thiamine-phosphate synthase family. Requires Mg(2+) as cofactor.

The catalysed reaction is 2-[(2R,5Z)-2-carboxy-4-methylthiazol-5(2H)-ylidene]ethyl phosphate + 4-amino-2-methyl-5-(diphosphooxymethyl)pyrimidine + 2 H(+) = thiamine phosphate + CO2 + diphosphate. The enzyme catalyses 2-(2-carboxy-4-methylthiazol-5-yl)ethyl phosphate + 4-amino-2-methyl-5-(diphosphooxymethyl)pyrimidine + 2 H(+) = thiamine phosphate + CO2 + diphosphate. It catalyses the reaction 4-methyl-5-(2-phosphooxyethyl)-thiazole + 4-amino-2-methyl-5-(diphosphooxymethyl)pyrimidine + H(+) = thiamine phosphate + diphosphate. It participates in cofactor biosynthesis; thiamine diphosphate biosynthesis; thiamine phosphate from 4-amino-2-methyl-5-diphosphomethylpyrimidine and 4-methyl-5-(2-phosphoethyl)-thiazole: step 1/1. Its function is as follows. Condenses 4-methyl-5-(beta-hydroxyethyl)thiazole monophosphate (THZ-P) and 2-methyl-4-amino-5-hydroxymethyl pyrimidine pyrophosphate (HMP-PP) to form thiamine monophosphate (TMP). The sequence is that of Thiamine-phosphate synthase from Clostridium perfringens (strain SM101 / Type A).